We begin with the raw amino-acid sequence, 825 residues long: IQ and AAA domain-containing protein 1-like (825 aa).

Positions 206–235 (RDQGAIVIQKVWKGYLQRKRIEQDRRVEME) constitute an IQ domain. The segment covering 344 to 366 (QAQESRKKDQEKKEKNKEKEKEK) has biased composition (basic and acidic residues). Disordered regions lie at residues 344–378 (QAQE…KEEK) and 459–487 (DREE…KDLT). The segment covering 467 to 482 (KSPKKKGGKKSGKKKK) has biased composition (basic residues). Residue 572–579 (GPSGMGKK) participates in ATP binding.

This sequence belongs to the AAA ATPase family.

The chain is IQ and AAA domain-containing protein 1-like (Iqca1l) from Mus musculus (Mouse).